Consider the following 198-residue polypeptide: UPF0314 protein Atu8092 (198 aa).

The next 3 helical transmembrane spans lie at 14-34 (LRWF…LYAM), 64-84 (WYTP…WLLF), and 150-170 (VPVW…GWLI).

The protein belongs to the UPF0314 family.

The protein localises to the cell membrane. This chain is UPF0314 protein Atu8092, found in Agrobacterium fabrum (strain C58 / ATCC 33970) (Agrobacterium tumefaciens (strain C58)).